The sequence spans 479 residues: Adenosylhomocysteinase (479 aa).

Residues threonine 56, aspartate 133, and glutamate 199 each coordinate substrate. An NAD(+)-binding site is contributed by 200–202 (TTT). Residues lysine 229 and aspartate 233 each coordinate substrate. NAD(+) contacts are provided by residues asparagine 234, 263–268 (GYGDVG), glutamate 286, asparagine 321, 342–344 (IGH), and asparagine 390.

The protein belongs to the adenosylhomocysteinase family. In terms of assembly, homotetramer. The cofactor is NAD(+).

It carries out the reaction S-adenosyl-L-homocysteine + H2O = L-homocysteine + adenosine. It functions in the pathway amino-acid biosynthesis; L-homocysteine biosynthesis; L-homocysteine from S-adenosyl-L-homocysteine: step 1/1. Functionally, adenosylhomocysteine is a competitive inhibitor of S-adenosyl-L-methionine-dependent methyl transferase reactions; therefore adenosylhomocysteinase may play a key role in the control of methylations via regulation of the intracellular concentration of adenosylhomocysteine. This Plasmodium chabaudi chabaudi protein is Adenosylhomocysteinase.